A 940-amino-acid chain; its full sequence is Translation initiation factor IF-2 (940 aa).

Composition is skewed to low complexity over residues 138–147 and 161–208; these read APVEVVAEPE and PVVV…ITEL. The interval 138-354 is disordered; sequence APVEVVAEPE…DRQTFQAPTE (217 aa). Basic and acidic residues-rich tracts occupy residues 214–271 and 289–311; these read IAAR…EEAA and AKAD…DGAK. Residues 440 to 609 form the tr-type G domain; it reads PRAPVVTVMG…LLQAEVLELT (170 aa). The tract at residues 449–456 is G1; it reads GHVDHGKT. Residue 449–456 participates in GTP binding; sequence GHVDHGKT. Residues 474 to 478 form a G2 region; that stretch reads GITQH. A G3 region spans residues 495-498; the sequence is DTPG. Residues 495–499 and 549–552 contribute to the GTP site; these read DTPGH and TKID. The interval 549–552 is G4; that stretch reads TKID. A G5 region spans residues 585 to 587; that stretch reads SAK.

This sequence belongs to the TRAFAC class translation factor GTPase superfamily. Classic translation factor GTPase family. IF-2 subfamily.

It is found in the cytoplasm. Functionally, one of the essential components for the initiation of protein synthesis. Protects formylmethionyl-tRNA from spontaneous hydrolysis and promotes its binding to the 30S ribosomal subunits. Also involved in the hydrolysis of GTP during the formation of the 70S ribosomal complex. In Azoarcus sp. (strain BH72), this protein is Translation initiation factor IF-2.